Reading from the N-terminus, the 173-residue chain is NADH-ubiquinone oxidoreductase chain 6 (173 aa).

Helical transmembrane passes span 1–21 (MTYF…AVAS), 27–47 (YGVV…VSLG), 48–68 (VSFV…VVFV), 87–107 (VVGY…LGGL), and 139–159 (CGVG…FVVL).

The protein belongs to the complex I subunit 6 family. In terms of assembly, core subunit of respiratory chain NADH dehydrogenase (Complex I) which is composed of 45 different subunits.

It localises to the mitochondrion inner membrane. The enzyme catalyses a ubiquinone + NADH + 5 H(+)(in) = a ubiquinol + NAD(+) + 4 H(+)(out). Core subunit of the mitochondrial membrane respiratory chain NADH dehydrogenase (Complex I) which catalyzes electron transfer from NADH through the respiratory chain, using ubiquinone as an electron acceptor. Essential for the catalytic activity and assembly of complex I. The sequence is that of NADH-ubiquinone oxidoreductase chain 6 (MT-ND6) from Gallus gallus (Chicken).